Consider the following 297-residue polypeptide: ABSCISIC ACID-INSENSITIVE 5-like protein 2 (297 aa).

Ser21, Ser43, and Ser81 each carry phosphoserine. Disordered stretches follow at residues 100–119 (IQQNKNGGSAHERRDKQPTL) and 138–157 (IPGSNHDGPVGGGSAGSGAG). At Thr118 the chain carries Phosphothreonine. Residues 146 to 157 (PVGGGSAGSGAG) show a composition bias toward gly residues. One can recognise a bZIP domain in the interval 225 to 288 (VERRQKRMIK…SVPPPDPKRQ (64 aa)). The tract at residues 227–246 (RRQKRMIKNRESAARSRARK) is basic motif. The segment at 253–267 (LEIKVSRLEEENERL) is leucine-zipper. Residues 272 to 297 (EVEKILPSVPPPDPKRQLRRTSSAPF) form a disordered region.

It belongs to the bZIP family. ABI5 subfamily. DNA-binding heterodimer with ABI5/DPBF1, DPBF2 or EEL/DPBF4. Interacts with the AFP proteins AFP1, AFP2, AFP3 and AFP4. Predominantly expressed in seeds.

The protein localises to the nucleus. Functionally, binds to the embryo specification element and the ABA-responsive element (ABRE) of the Dc3 gene promoter. Could participate in abscisic acid-regulated gene expression during seed development. This is ABSCISIC ACID-INSENSITIVE 5-like protein 2 (DPBF3) from Arabidopsis thaliana (Mouse-ear cress).